The chain runs to 2016 residues: Cell adhesion molecule Dscam1 (2016 aa).

An N-terminal signal peptide occupies residues 1–28 (MNMPNERLKWLMLFAAVALIACGSQTLA). The Extracellular portion of the chain corresponds to 29–1618 (ANPPDADQKG…TIRIILSNLN (1590 aa)). Ig-like C2-type domains lie at 39–134 (PVFL…VHVR), 138–230 (AQYY…TRLS), 247–338 (PKIN…TVLT), 342–421 (PLSA…AELK), 428–522 (PPVI…AKLN), 527–613 (PYIR…LEVQ), 618–712 (PQVL…LQVN), 715–807 (PRWI…IMIS), and 812–904 (PEFT…ASIN). The N-linked (GlcNAc...) asparagine glycan is linked to N53. A disulfide bridge links C61 with C117. 3 residues coordinate Zn(2+): D144, N146, and L161. 13 cysteine pairs are disulfide-bonded: C160-C217, C160-T219, C160-K220, C269-C322, P270-V323, A276-G329, C364-C405, C450-C506, C547-C596, C640-C694, V641-C694, V641-I695, and C736-C790. An N-linked (GlcNAc...) asparagine glycan is attached at N325. 2 N-linked (GlcNAc...) asparagine glycosylation sites follow: N492 and N577. An N-linked (GlcNAc...) asparagine glycan is attached at N820. C833 and C890 are joined by a disulfide. 4 Fibronectin type-III domains span residues 913–1007 (MPYA…TAEE), 1012–1116 (KPQN…TPSQ), 1117–1213 (PPSD…TEPD), and 1217–1310 (APTD…PSDQ). 3 N-linked (GlcNAc...) asparagine glycosylation sites follow: N1022, N1055, and N1186. The region spanning 1312 to 1394 (PAKIASFDDT…ENSIAKDSIT (83 aa)) is the Ig-like C2-type 10 domain. C1334 and C1382 are disulfide-bonded. Fibronectin type-III domains are found at residues 1402–1495 (PPQS…TKGQ) and 1499–1594 (LPEK…TGGT). A helical transmembrane segment spans residues 1619–1639 (LVVPVVAALLVIIIAIIVICI). The Cytoplasmic segment spans residues 1640–2016 (LRSKGNHHKD…GFTAYDTMAV (377 aa)). A PXXP motif 1; SH3-binding motif is present at residues 1685–1688 (PPVP). The disordered stretch occupies residues 1688 to 1719 (PGSNYNTCDRIKRGRGGLRSNHSTWDPRRNPN). A PXXP motif 2; SH3-binding motif is present at residues 1727-1730 (PPVP). 2 disordered regions span residues 1787-1846 (GHAG…DDPA) and 1862-2016 (SQGG…TMAV). Positions 1826 to 1836 (KNSQGGQSSIY) are enriched in polar residues. The YXXP motif 1; potential SH2-binding signature appears at 1842–1845 (YDDP). The YXXP motif 2; potential SH2-binding signature appears at 1875–1878 (YDDP). Residues 1897-1918 (GQPYDHYGSRGSMGRRSIGSAR) are compositionally biased toward low complexity. The short motif at 1925–1932 (PEPPPPPP) is the Polyproline tract (probable SH3-binding) element. Basic and acidic residues-rich tracts occupy residues 1944–1962 (DSKE…DHGP) and 1974–1993 (QPKD…RNET). Positions 1994–2004 (GPKQLQLQQAN) are enriched in polar residues.

As to quaternary structure, homodimer (via extracellular region); alternative splicing produces a potential 19,008 different ectodomains and the majority of these show strong isoform-specific homodimerization. Interacts (via cytoplasmic domain) with dock/dreadlocks (via SH2 and SH3 domains); the interaction is direct and may require Dscam1 to be phosphorylated. Post-translationally, phosphorylated on tyrosine residues in the intracellular domain. Tyrosine protein kinase Src42A and possibly Src64B are involved in this phosphorylation. Glycosylation on Asn-53 and Asn-325 is involved in stabilizing dimerization. In terms of processing, proteolytically processed, probably to generate a secreted form. Secreted into the hemolymph (at protein level). Expressed in brain and eye-antennal imaginal disks, including R3/R4 and R7 photoreceptor cells. Individual R3/R4 cells express between 14 and 50 randomly generated mRNAs encoding distinct isoforms.

The protein resides in the cell membrane. Its subcellular location is the cell projection. It localises to the neuron projection. The protein localises to the axon. It is found in the perikaryon. The protein resides in the dendrite. Its subcellular location is the secreted. Cell surface receptor involved in guidance and targeting of growing nerve axons. Required during Bolwig's organ differentiation for accurate and efficient targeting of photoreceptor neuron axons to their synaptic targets in the brain via the P2 intermediate target neuron. Involved in isoneural self-avoidance during dendrite arborization but not in heteroneural recognition and repulsion during tiling by related neurons of the same class. Involved in regulating axon bifurcation and divergent extension in the developing mushroom body. Essential for axon arborisation in ellipsoid body. Exhibits an extraordinary level of molecular diversity resulting from alternative splicing. Isoforms differing in their ectodomain makeup show a high degree of functional redundancy while isoforms with different transmembrane domains are involved in different neuronal morphogenetic processes and are differentially targeted to dendrites or axons. The vast majority of isoforms exhibit strong isoform-specific homophilic binding. Individual cells express a distinct randomly generated repertoire of isoforms. Cell surfaces bearing identical repertoires of Dscam1 isoforms, such as those from the same cell, trigger recognition and avoidance. A subset of isoforms is expressed in fat body cells and hemocytes, cells that are part of the insect immune response, and these isoforms are secreted into the hemolymph. The secreted form comprising the ectodomain can bind to bacteria, such as Escherichia coli, and may act as an opsonin enhancing their phagocytosis by hemocytes. This chain is Cell adhesion molecule Dscam1, found in Drosophila melanogaster (Fruit fly).